The chain runs to 498 residues: ATP synthase subunit beta, chloroplastic (498 aa).

Gly-172–Thr-179 is a binding site for ATP.

The protein belongs to the ATPase alpha/beta chains family. F-type ATPases have 2 components, CF(1) - the catalytic core - and CF(0) - the membrane proton channel. CF(1) has five subunits: alpha(3), beta(3), gamma(1), delta(1), epsilon(1). CF(0) has four main subunits: a(1), b(1), b'(1) and c(9-12).

It localises to the plastid. It is found in the chloroplast thylakoid membrane. The enzyme catalyses ATP + H2O + 4 H(+)(in) = ADP + phosphate + 5 H(+)(out). Its function is as follows. Produces ATP from ADP in the presence of a proton gradient across the membrane. The catalytic sites are hosted primarily by the beta subunits. The sequence is that of ATP synthase subunit beta, chloroplastic from Calamus usitatus (Palm tree).